The primary structure comprises 390 residues: Chorismate synthase 1 (390 aa).

R39 and R45 together coordinate NADP(+). Residues 132-134, 253-254, G298, 313-317, and R339 contribute to the FMN site; these read RSS, NA, and KPIPT.

The protein belongs to the chorismate synthase family. As to quaternary structure, homotetramer. Requires FMNH2 as cofactor.

The enzyme catalyses 5-O-(1-carboxyvinyl)-3-phosphoshikimate = chorismate + phosphate. It participates in metabolic intermediate biosynthesis; chorismate biosynthesis; chorismate from D-erythrose 4-phosphate and phosphoenolpyruvate: step 7/7. Its function is as follows. Catalyzes the anti-1,4-elimination of the C-3 phosphate and the C-6 proR hydrogen from 5-enolpyruvylshikimate-3-phosphate (EPSP) to yield chorismate, which is the branch point compound that serves as the starting substrate for the three terminal pathways of aromatic amino acid biosynthesis. This reaction introduces a second double bond into the aromatic ring system. In Bacillus anthracis, this protein is Chorismate synthase 1.